The sequence spans 898 residues: Protein argonaute 1 (898 aa).

Residues 1 to 52 (MLALNAGSQYPGRGRGRGRGDGGNRVHKHDGINRYHGGFRGGRGGGGGGFRD) are disordered. Basic and acidic residues predominate over residues 18–33 (GRGDGGNRVHKHDGIN). Over residues 38-50 (GFRGGRGGGGGGF) the composition is skewed to gly residues. Residues 283–378 (KCSDEMRRLR…IFADRTKMSR (96 aa)) enclose the PAZ domain. The Piwi domain maps to 542-883 (FAMVKLRTKE…YARKYGSLKS (342 aa)).

It belongs to the argonaute family.

It localises to the cytoplasm. Involved in RNA-mediated gene silencing (RNAi) of mobile elements and repeats including retroposons SLACS (Spliced Leader Associated Conserved Sequence), TATE (Telomere-Associated Transposable Element) and TAS-like sequences (Telomere Associated Sequence), and a family of 74-nucleotide long tandem repeats, CIR74. Predominantly binds to siRNAs derived from SLACS and TATE transposable elements and to a lesser extent to siRNAs from TAS-like and CIR74 elements. This is Protein argonaute 1 from Leishmania braziliensis.